The primary structure comprises 810 residues: DNA ligase (810 aa).

NAD(+) contacts are provided by residues 46-50, 95-96, and Glu129; these read DAEYD and SL. Lys131 acts as the N6-AMP-lysine intermediate in catalysis. 4 residues coordinate NAD(+): Arg152, Glu189, Lys305, and Lys329. 4 residues coordinate Zn(2+): Cys434, Cys437, Cys458, and Cys464. Positions 528 to 548 are disordered; sequence ERRAESGTAEPPKKAAKKKGD. The 80-residue stretch at 731–810 folds into the BRCT domain; that stretch reads AAASTFAGKT…DDWLAMVAQG (80 aa).

It belongs to the NAD-dependent DNA ligase family. LigA subfamily. Requires Mg(2+) as cofactor. The cofactor is Mn(2+).

The enzyme catalyses NAD(+) + (deoxyribonucleotide)n-3'-hydroxyl + 5'-phospho-(deoxyribonucleotide)m = (deoxyribonucleotide)n+m + AMP + beta-nicotinamide D-nucleotide.. DNA ligase that catalyzes the formation of phosphodiester linkages between 5'-phosphoryl and 3'-hydroxyl groups in double-stranded DNA using NAD as a coenzyme and as the energy source for the reaction. It is essential for DNA replication and repair of damaged DNA. The polypeptide is DNA ligase (Methylobacterium radiotolerans (strain ATCC 27329 / DSM 1819 / JCM 2831 / NBRC 15690 / NCIMB 10815 / 0-1)).